Reading from the N-terminus, the 160-residue chain is Ribosome maturation factor RimP (160 aa).

Belongs to the RimP family.

It localises to the cytoplasm. Required for maturation of 30S ribosomal subunits. The sequence is that of Ribosome maturation factor RimP from Geobacter sp. (strain M21).